The sequence spans 138 residues: Putative nickel-responsive regulator (138 aa).

The Ni(2+) site is built by His-76, His-87, His-89, and Cys-95.

The protein belongs to the transcriptional regulatory CopG/NikR family. It depends on Ni(2+) as a cofactor.

Its function is as follows. Transcriptional regulator. This chain is Putative nickel-responsive regulator, found in Pseudomonas putida (strain W619).